Here is a 304-residue protein sequence, read N- to C-terminus: Secreted mono- and diacylglycerol lipase LIP1 (304 aa).

The signal sequence occupies residues 1 to 19; it reads MLFSRFVLLAFGSVAAVSA. An O-linked (Man...) threonine glycan is attached at T32. A disulfide bridge links C57 with C297. The Nucleophile role is filled by S171. Residue D228 is part of the active site. N253 carries N-linked (GlcNAc...) asparagine glycosylation. The active site involves H281.

It belongs to the AB hydrolase superfamily. Lipase family. Class 3 subfamily.

Its subcellular location is the secreted. The protein localises to the cell wall. It catalyses the reaction a monoacylglycerol + H2O = glycerol + a fatty acid + H(+). It carries out the reaction a diacylglycerol + H2O = a monoacylglycerol + a fatty acid + H(+). Its activity is regulated as follows. RHC 80267, a well-known inhibitor of diacylglycerol lipases from mammals, also acts as an inhibitor for LIP1/SMG1. In terms of biological role, secreted lipase involved in Dandruff and seborrheic dermatitis (D/SD) probably via lipase-mediated breakdown of sebaceous lipids and release of irritating free fatty acids. Shows activity against monoglyceride and diglyceride substrates, but not triglyceride substrates and does not exhibit regio-selective production of diacylglycerols. Able to hydrolyze diacylglycerols such as distearin, dilinolein, dipalmitoylglycerol and dipalmitolein. Cleaves oleic acid from 1,2 isomers of diolein on both the 1 and the 2 position of the glycerol backbone, resulting mainly in free fatty acids but no monoolein is detected. Shows activity on monoolein and liberates mostly free fatty acids, but can also perform the reverse reaction and produce diolein. The polypeptide is Secreted mono- and diacylglycerol lipase LIP1 (Malassezia globosa (strain ATCC MYA-4612 / CBS 7966) (Dandruff-associated fungus)).